Here is a 486-residue protein sequence, read N- to C-terminus: Bifunctional protein HldE (486 aa).

The interval 1–331 (MAEHDDGDLI…VDAVKPASGA (331 aa)) is ribokinase. 208–211 (NRRE) provides a ligand contact to ATP. The active site involves aspartate 277. Residues 357 to 486 (FTNGCFDLLH…TTATVTRLRS (130 aa)) form a cytidylyltransferase region.

In the N-terminal section; belongs to the carbohydrate kinase PfkB family. The protein in the C-terminal section; belongs to the cytidylyltransferase family. As to quaternary structure, homodimer.

It catalyses the reaction D-glycero-beta-D-manno-heptose 7-phosphate + ATP = D-glycero-beta-D-manno-heptose 1,7-bisphosphate + ADP + H(+). The catalysed reaction is D-glycero-beta-D-manno-heptose 1-phosphate + ATP + H(+) = ADP-D-glycero-beta-D-manno-heptose + diphosphate. Its pathway is nucleotide-sugar biosynthesis; ADP-L-glycero-beta-D-manno-heptose biosynthesis; ADP-L-glycero-beta-D-manno-heptose from D-glycero-beta-D-manno-heptose 7-phosphate: step 1/4. It functions in the pathway nucleotide-sugar biosynthesis; ADP-L-glycero-beta-D-manno-heptose biosynthesis; ADP-L-glycero-beta-D-manno-heptose from D-glycero-beta-D-manno-heptose 7-phosphate: step 3/4. In terms of biological role, catalyzes the phosphorylation of D-glycero-D-manno-heptose 7-phosphate at the C-1 position to selectively form D-glycero-beta-D-manno-heptose-1,7-bisphosphate. Functionally, catalyzes the ADP transfer from ATP to D-glycero-beta-D-manno-heptose 1-phosphate, yielding ADP-D-glycero-beta-D-manno-heptose. This Acidiphilium cryptum (strain JF-5) protein is Bifunctional protein HldE.